The sequence spans 482 residues: Aspartic proteinase 36 (482 aa).

Positions 1–27 are cleaved as a signal peptide; it reads MVTTMDPSRISRIVAVVFVLVIQVVSG. N-linked (GlcNAc...) asparagine glycosylation is present at Asn-32. The region spanning 78 to 429 is the Peptidase A1 domain; that stretch reads YFTKIKLGSP…DLENEVIGWA (352 aa). The active site involves Asp-96. 3 N-linked (GlcNAc...) asparagine glycosylation sites follow: Asn-178, Asn-204, and Asn-226. Residue Asp-310 is part of the active site. A disulfide bridge connects residues Cys-347 and Cys-388. Asn-432 is a glycosylation site (N-linked (GlcNAc...) asparagine). Ser-456 carries GPI-anchor amidated serine lipidation. Residues 457–482 constitute a propeptide, removed in mature form; sequence AASSVMNGTLVTLLSILIWVFHSFTS. Residue Asn-463 is glycosylated (N-linked (GlcNAc...) asparagine).

It belongs to the peptidase A1 family. In terms of tissue distribution, highly expressed in pollen and pollen tubes. Mostly expressed in roots, flowers and inflorescence, and at lower levels in stems, seedlings and siliques.

The protein localises to the cell membrane. It localises to the cytoplasm. It is found in the cytosol. Functionally, displays aspartic proteolytic activity. Together with A39, contributes to pollen and ovule development, including the apical cell wall constitution of the growing pollen tubes. In Arabidopsis thaliana (Mouse-ear cress), this protein is Aspartic proteinase 36.